A 457-amino-acid polypeptide reads, in one-letter code: Multidrug resistance protein MdtK (457 aa).

The next 12 helical transmembrane spans lie at 11-31 (LLAL…MGFV), 53-73 (IWLP…PVIA), 93-113 (WLAG…GYII), 127-147 (AVGY…FQVA), 160-180 (GMVM…IFIY), 189-209 (GGVG…LAMV), 243-263 (LPIA…ALLV), 276-296 (IALN…AAVT), 314-334 (AART…IFTV), 350-370 (VVTL…SDSI), 387-407 (IFYI…YILA), and 418-438 (PAGF…MMML).

Belongs to the multi antimicrobial extrusion (MATE) (TC 2.A.66.1) family. MdtK subfamily.

It localises to the cell inner membrane. In terms of biological role, multidrug efflux pump that functions probably as a Na(+)/drug antiporter. The protein is Multidrug resistance protein MdtK of Escherichia coli (strain SE11).